The primary structure comprises 320 residues: Aurora kinase B (320 aa).

The segment covering 1–10 (MQNKENREPR) has biased composition (basic and acidic residues). Residues 1 to 38 (MQNKENREPRVQQTPSAGVGPLRVEMNPDTHAVSGPGR) are disordered. The Protein kinase domain occupies 53-303 (FDIGRPLGKG…LRSVMEHPWV (251 aa)). ATP contacts are provided by residues 59–67 (LGKGKFGNV) and lysine 82. Catalysis depends on aspartate 176, which acts as the Proton acceptor.

The protein belongs to the protein kinase superfamily. Ser/Thr protein kinase family. Aurora subfamily. In terms of assembly, component of the chromosomal passenger complex (CPC).

Its subcellular location is the nucleus. It is found in the chromosome. It localises to the centromere. The protein resides in the cytoplasm. The protein localises to the cytoskeleton. Its subcellular location is the spindle. It is found in the midbody. The catalysed reaction is L-seryl-[protein] + ATP = O-phospho-L-seryl-[protein] + ADP + H(+). The enzyme catalyses L-threonyl-[protein] + ATP = O-phospho-L-threonyl-[protein] + ADP + H(+). Kinase activity is stimulated by cell-cycle specific phosphorylation. Its function is as follows. Serine/threonine-protein kinase component of the chromosomal passenger complex (CPC), a complex that acts as a key regulator of mitosis. The CPC complex has essential functions at the centromere in ensuring correct chromosome alignment and segregation and is required for chromatin-induced microtubule stabilization and spindle assembly. Involved in the bipolar attachment of spindle microtubules to kinetochores and is a key regulator for the onset of cytokinesis during mitosis. Required for central/midzone spindle assembly and cleavage furrow formation. Key component of the cytokinesis checkpoint, a process required to delay abscission to prevent both premature resolution of intercellular chromosome bridges and accumulation of DNA damage. Phosphorylates 'Ser-10' of histone H3 during mitosis. This is Aurora kinase B (aurkb) from Danio rerio (Zebrafish).